Reading from the N-terminus, the 197-residue chain is Carnitine operon protein CaiE (197 aa).

The protein belongs to the transferase hexapeptide repeat family.

It participates in amine and polyamine metabolism; carnitine metabolism. Overproduction of CaiE stimulates the activity of CaiB and CaiD. This is Carnitine operon protein CaiE from Citrobacter koseri (strain ATCC BAA-895 / CDC 4225-83 / SGSC4696).